Here is a 324-residue protein sequence, read N- to C-terminus: uncharacterized protein (324 aa).

This is an uncharacterized protein from Saccharomyces cerevisiae (strain ATCC 204508 / S288c) (Baker's yeast).